A 231-amino-acid chain; its full sequence is Putative cobalt transport protein CbiM 1 (231 aa).

6 helical membrane passes run 6–26 (GFLP…FLIY), 41–61 (VLPL…VDIP), 79–99 (FFGP…QALL), 107–127 (TLGA…WLVF), 136–156 (VPLG…TYLI), and 172–192 (LTAF…ISII).

Belongs to the CbiM family. In terms of assembly, forms an energy-coupling factor (ECF) transporter complex composed of an ATP-binding protein (A component, CbiO), a transmembrane protein (T component, CbiQ) and 2 possible substrate-capture proteins (S components, CbiM and CbiN) of unknown stoichimetry.

It localises to the cell membrane. The protein operates within cofactor biosynthesis; adenosylcobalamin biosynthesis. Part of the energy-coupling factor (ECF) transporter complex CbiMNOQ involved in cobalt import. The chain is Putative cobalt transport protein CbiM 1 from Methanocorpusculum labreanum (strain ATCC 43576 / DSM 4855 / Z).